The chain runs to 237 residues: MSQQYEKKVERTEVVYGGDRRVEGSASASAEKTTNYTHTEIRAPMVNPLPPIISTGAAGLAQEIVGEGFTASATRISGAAATTQVLESQASREQAFKDQEKYSREQAAIARAHDKDLEKKTEEYRKTAEAEAEKIRKELEKQHARDVEFRKDLVESAIDRQKREVDLEAKYAKKELEHERELAMNALEQSKMATNVQVQMDTAAGTTVSGGTTVSEHTEVHDGKEKKSLGEKIKSLF.

The interval Phe96–Arg125 is disordered. A compositionally biased stretch (basic and acidic residues) spans Arg111 to Arg125. Residues Lys115 to Ala193 adopt a coiled-coil conformation. CAHS motif stretches follow at residues Tyr124–Gln142 and Gln161–Glu179. A compositionally biased stretch (low complexity) spans Ala204–Ser215. A disordered region spans residues Ala204 to Phe237. Residues Glu216 to Phe237 are compositionally biased toward basic and acidic residues.

It belongs to the Cytosolic-abundant heat soluble protein (CAHS) family.

It is found in the cytoplasm. Functionally, CAHS proteins are cytosolic heat soluble proteins that seem to contribute to the anhydrobiosis in tardigrades, but their specific mechanisms are yet to be identified. It is possible that protection during anhydrobiosis might occur via the stabilization of vitrifying small molecules such as sugars, but not via the direct glass transition of CAHS proteins themselves. In Hypsibius exemplaris (Freshwater tardigrade), this protein is Cytosolic-abundant heat soluble protein 86272.